Reading from the N-terminus, the 274-residue chain is Ribosomal RNA small subunit methyltransferase A (274 aa).

Residues H15, L17, G42, E64, D89, and N108 each contribute to the S-adenosyl-L-methionine site.

The protein belongs to the class I-like SAM-binding methyltransferase superfamily. rRNA adenine N(6)-methyltransferase family. RsmA subfamily.

The protein localises to the cytoplasm. The catalysed reaction is adenosine(1518)/adenosine(1519) in 16S rRNA + 4 S-adenosyl-L-methionine = N(6)-dimethyladenosine(1518)/N(6)-dimethyladenosine(1519) in 16S rRNA + 4 S-adenosyl-L-homocysteine + 4 H(+). Its function is as follows. Specifically dimethylates two adjacent adenosines (A1518 and A1519) in the loop of a conserved hairpin near the 3'-end of 16S rRNA in the 30S particle. May play a critical role in biogenesis of 30S subunits. The sequence is that of Ribosomal RNA small subunit methyltransferase A from Prochlorococcus marinus (strain MIT 9215).